The chain runs to 91 residues: Small ribosomal subunit protein uS19 (91 aa).

This sequence belongs to the universal ribosomal protein uS19 family.

Functionally, protein S19 forms a complex with S13 that binds strongly to the 16S ribosomal RNA. The sequence is that of Small ribosomal subunit protein uS19 from Erythrobacter litoralis (strain HTCC2594).